Here is a 239-residue protein sequence, read N- to C-terminus: Uridylate kinase (239 aa).

Residue 12–15 (KLSG) participates in ATP binding. Residues 20 to 25 (GEKGFG) form an involved in allosteric activation by GTP region. Glycine 54 lines the UMP pocket. ATP contacts are provided by glycine 55 and arginine 59. UMP is bound by residues aspartate 72 and 133–140 (TGNPFFST). ATP is bound by residues tyrosine 166 and aspartate 169.

This sequence belongs to the UMP kinase family. Homohexamer.

The protein resides in the cytoplasm. The enzyme catalyses UMP + ATP = UDP + ADP. Its pathway is pyrimidine metabolism; CTP biosynthesis via de novo pathway; UDP from UMP (UMPK route): step 1/1. Allosterically activated by GTP. Inhibited by UTP. Catalyzes the reversible phosphorylation of UMP to UDP. The polypeptide is Uridylate kinase (Caldicellulosiruptor saccharolyticus (strain ATCC 43494 / DSM 8903 / Tp8T 6331)).